The chain runs to 169 residues: Disulfide bond formation protein B (169 aa).

Topologically, residues 1–14 are cytoplasmic; sequence MNNLTLSLRRERRL. A helical transmembrane segment spans residues 15–31; the sequence is LVLLALVCLALLAGALY. The Periplasmic segment spans residues 32 to 49; the sequence is LQYVKNEDPCPLCIIQRY. A disulfide bond links cysteine 41 and cysteine 44. Residues 50 to 64 form a helical membrane-spanning segment; sequence FFVLIAVFAFIGAGM. Over 65–71 the chain is Cytoplasmic; sequence ASGAGVA. A helical transmembrane segment spans residues 72–89; sequence VTEALIVLSAAAGVGTAA. Over 90–144 the chain is Periplasmic; it reads RHLYVQLNPGFSCGFDALQPVVDSLPPARWLPGVFKVAGLCETVYPPIFGILLPG. Cysteine 102 and cysteine 130 form a disulfide bridge. The chain crosses the membrane as a helical span at residues 145 to 163; sequence WALIAFVLIAVPVAVSLLR. The Cytoplasmic portion of the chain corresponds to 164–169; it reads HRGRLR.

The protein belongs to the DsbB family.

The protein localises to the cell inner membrane. Functionally, required for disulfide bond formation in some periplasmic proteins. Acts by oxidizing the DsbA protein. The protein is Disulfide bond formation protein B of Burkholderia mallei (strain ATCC 23344).